Reading from the N-terminus, the 345-residue chain is NADH-quinone oxidoreductase subunit H (345 aa).

The next 8 membrane-spanning stretches (helical) occupy residues 9-29, 82-102, 108-128, 154-174, 183-203, 241-261, 282-302, and 325-345; these read ALGAFLVINAMLLSASLLVFA, VVMVVIAMTTASLIPFAEGVV, VGVIMLLALTSISVYGVTLAG, MGLAVISVVLIAGSLNFMEIV, LLGWNAVRNPIGCLIFIVTAF, YVNWFIASFFIVTLFFGGYLV, LLQFVSLMLKVSFFSFVFIWV, and IALANAILIALGVVLFGAVGL.

This sequence belongs to the complex I subunit 1 family. As to quaternary structure, NDH-1 is composed of 14 different subunits. Subunits NuoA, H, J, K, L, M, N constitute the membrane sector of the complex.

The protein localises to the cell inner membrane. The enzyme catalyses a quinone + NADH + 5 H(+)(in) = a quinol + NAD(+) + 4 H(+)(out). NDH-1 shuttles electrons from NADH, via FMN and iron-sulfur (Fe-S) centers, to quinones in the respiratory chain. The immediate electron acceptor for the enzyme in this species is believed to be ubiquinone. Couples the redox reaction to proton translocation (for every two electrons transferred, four hydrogen ions are translocated across the cytoplasmic membrane), and thus conserves the redox energy in a proton gradient. This subunit may bind ubiquinone. This Salinibacter ruber (strain DSM 13855 / M31) protein is NADH-quinone oxidoreductase subunit H.